The chain runs to 313 residues: Homoserine O-succinyltransferase (313 aa).

Cysteine 142 (acyl-thioester intermediate) is an active-site residue. Positions 163 and 192 each coordinate substrate. Histidine 235 functions as the Proton acceptor in the catalytic mechanism. Glutamate 237 is a catalytic residue. Arginine 249 contributes to the substrate binding site.

The protein belongs to the MetA family.

The protein resides in the cytoplasm. The enzyme catalyses L-homoserine + succinyl-CoA = O-succinyl-L-homoserine + CoA. It functions in the pathway amino-acid biosynthesis; L-methionine biosynthesis via de novo pathway; O-succinyl-L-homoserine from L-homoserine: step 1/1. Its function is as follows. Transfers a succinyl group from succinyl-CoA to L-homoserine, forming succinyl-L-homoserine. The polypeptide is Homoserine O-succinyltransferase (Aliivibrio fischeri (strain MJ11) (Vibrio fischeri)).